Here is a 135-residue protein sequence, read N- to C-terminus: UPF0251 protein Hore_18270 (135 aa).

This sequence belongs to the UPF0251 family.

This Halothermothrix orenii (strain H 168 / OCM 544 / DSM 9562) protein is UPF0251 protein Hore_18270.